Consider the following 204-residue polypeptide: Imidazoleglycerol-phosphate dehydratase (204 aa).

It belongs to the imidazoleglycerol-phosphate dehydratase family.

It localises to the cytoplasm. The catalysed reaction is D-erythro-1-(imidazol-4-yl)glycerol 3-phosphate = 3-(imidazol-4-yl)-2-oxopropyl phosphate + H2O. It functions in the pathway amino-acid biosynthesis; L-histidine biosynthesis; L-histidine from 5-phospho-alpha-D-ribose 1-diphosphate: step 6/9. This chain is Imidazoleglycerol-phosphate dehydratase, found in Rhodococcus erythropolis (strain PR4 / NBRC 100887).